The following is a 289-amino-acid chain: Fatty acid elongase 1 (289 aa).

The next 7 membrane-spanning stretches (helical) occupy residues Val-22 to Ala-42, Ala-72 to Thr-92, Phe-123 to Val-143, Phe-152 to Gly-172, Ile-177 to Ala-197, Trp-208 to Leu-228, and Leu-251 to Leu-271. The short motif at His-154–His-158 is the HxxHH motif element. The active-site Nucleophile is the His-157. An N-linked (GlcNAc...) asparagine glycan is attached at Asn-282.

The protein belongs to the ELO family.

It is found in the endoplasmic reticulum membrane. It catalyses the reaction an acyl-CoA + malonyl-CoA + H(+) = a 3-oxoacyl-CoA + CO2 + CoA. The protein operates within lipid metabolism; fatty acid biosynthesis. Its function is as follows. Involved in the synthesis of fatty acids. Elongates C4 fatty acids. Required for the normal mitochondrial function, energy metabolism and growth of epimastigotes. The chain is Fatty acid elongase 1 from Trypanosoma cruzi (strain CL Brener).